The following is a 341-amino-acid chain: MSGDTEEVTRLRKPRFSYEENQILIREVRAHYPMLYGAQSRRLSVAERRRVWEGIAAKINAITNWKRTAQEVQKRWNDFKRRTKEKLARVPHSTQSGTAEEAMTAEEETIFAILGPGVMPGSSHYGPVTHLGAMDFNPSGPGSSSPETSLSAPCAPIEAPLLLHPKESPSPTSQLHIVQLPHLTPSPDPSECPSPPPPGSGTPLLTPSGVAQHYDPTVAMLRAQQETAEAIRHLTYTLRQSMDRLTNVLAAILPLVPHQPPESPTPSGILGPVYYPTKTEPESEPCCPVTYEEENGEDGGEEEIQEVIAEPPRSPSPPPPNKRKRFGYLSQRKRRGRWKNL.

The 73-residue stretch at 8–80 (VTRLRKPRFS…EVQKRWNDFK (73 aa)) folds into the Myb-like domain. Disordered stretches follow at residues 84–103 (KEKL…EEAM), 180–210 (LPHL…PSGV), and 309–341 (AEPP…WKNL). The segment covering 184–200 (TPSPDPSECPSPPPPGS) has biased composition (pro residues). Positions 321-341 (NKRKRFGYLSQRKRRGRWKNL) are enriched in basic residues.

The protein localises to the nucleus. In terms of biological role, transcriptional repressor; DNA-binding protein that specifically recognizes the core sequence 5'-YAAC[GT]G-3'. The sequence is that of Myb-related transcription factor, partner of profilin (mypop) from Xenopus laevis (African clawed frog).